The primary structure comprises 358 residues: tRNA-specific 2-thiouridylase MnmA 2 (358 aa).

ATP-binding positions include 11-18 (GMSGGVDS) and methionine 37. Cysteine 106 serves as the catalytic Nucleophile. An intrachain disulfide couples cysteine 106 to cysteine 202. Glycine 130 is an ATP binding site. The interval 152–154 (KDQ) is interaction with tRNA. Cysteine 202 functions as the Cysteine persulfide intermediate in the catalytic mechanism. An interaction with tRNA region spans residues 308 to 309 (RY).

The protein belongs to the MnmA/TRMU family.

It is found in the cytoplasm. It catalyses the reaction S-sulfanyl-L-cysteinyl-[protein] + uridine(34) in tRNA + AH2 + ATP = 2-thiouridine(34) in tRNA + L-cysteinyl-[protein] + A + AMP + diphosphate + H(+). In terms of biological role, catalyzes the 2-thiolation of uridine at the wobble position (U34) of tRNA, leading to the formation of s(2)U34. This chain is tRNA-specific 2-thiouridylase MnmA 2, found in Clostridium tetani (strain Massachusetts / E88).